The primary structure comprises 271 residues: Cell division protein FtsQ (271 aa).

The tract at residues 1-37 (MAAGPTTAEKSGASGAKRSSKGSSDGPSRPGTRNRKF) is disordered. Topologically, residues 1–43 (MAAGPTTAEKSGASGAKRSSKGSSDGPSRPGTRNRKFRMPGTR) are cytoplasmic. Residues 8-24 (AEKSGASGAKRSSKGSS) show a composition bias toward low complexity. A helical membrane pass occupies residues 44 to 64 (ALLITLGVLLLVAGGLWALYG). Residues 65-271 (STWFRVERVK…APTAPASSGS (207 aa)) lie on the Extracellular side of the membrane. The POTRA domain occupies 68 to 137 (FRVERVKTSG…HGIGLKVTER (70 aa)).

The protein belongs to the FtsQ/DivIB family. FtsQ subfamily.

It localises to the cell membrane. Its function is as follows. Essential cell division protein. This Streptomyces venezuelae (strain ATCC 10712 / CBS 650.69 / DSM 40230 / JCM 4526 / NBRC 13096 / PD 04745) protein is Cell division protein FtsQ.